A 601-amino-acid chain; its full sequence is Elongation factor 4 (601 aa).

The 183-residue stretch at 7-189 folds into the tr-type G domain; sequence KNIRNFSIVA…AIVTRLPPPM (183 aa). Residues 19–24 and 136–139 each bind GTP; these read DHGKST and NKVD.

The protein belongs to the TRAFAC class translation factor GTPase superfamily. Classic translation factor GTPase family. LepA subfamily.

It is found in the cell inner membrane. It catalyses the reaction GTP + H2O = GDP + phosphate + H(+). In terms of biological role, required for accurate and efficient protein synthesis under certain stress conditions. May act as a fidelity factor of the translation reaction, by catalyzing a one-codon backward translocation of tRNAs on improperly translocated ribosomes. Back-translocation proceeds from a post-translocation (POST) complex to a pre-translocation (PRE) complex, thus giving elongation factor G a second chance to translocate the tRNAs correctly. Binds to ribosomes in a GTP-dependent manner. In Xanthobacter autotrophicus (strain ATCC BAA-1158 / Py2), this protein is Elongation factor 4.